Consider the following 283-residue polypeptide: Protein BASIC PENTACYSTEINE5 (283 aa).

Positions 51–86 (AVKERNEAVAATKEALASRDEALEQRDKALSERDNA) are alanine-zipper. Residues 63–89 (KEALASRDEALEQRDKALSERDNAIME) are a coiled coil. The tract at residues 122 to 176 (EESHLPNPSPISTIPPEAANTRPTKRKKESKQGKKMGEDLNRPVASPGKKSRKDW) is disordered. Residues 151–162 (SKQGKKMGEDLN) show a composition bias toward basic and acidic residues.

It belongs to the BBR/BPC family. Homodimer. Heterodimer. In terms of tissue distribution, expressed in seedlings, leaves and pistils.

It localises to the nucleus. Transcriptional regulator that specifically binds to GA-rich elements (GAGA-repeats) present in regulatory sequences of genes involved in developmental processes. This chain is Protein BASIC PENTACYSTEINE5 (BPC5), found in Arabidopsis thaliana (Mouse-ear cress).